Here is a 456-residue protein sequence, read N- to C-terminus: tRNA modification GTPase MnmE (456 aa).

3 residues coordinate (6S)-5-formyl-5,6,7,8-tetrahydrofolate: R24, E81, and K120. The TrmE-type G domain occupies 216–379 (GMTVVIAGRP…LRDHLKACMG (164 aa)). N226 is a binding site for K(+). Residues 226 to 231 (NAGKSS), 245 to 251 (TAIAGTT), 270 to 273 (DTAG), and 335 to 338 (NKAD) each bind GTP. S230 serves as a coordination point for Mg(2+). K(+)-binding residues include T245, I247, and T250. T251 is a Mg(2+) binding site. K456 is a (6S)-5-formyl-5,6,7,8-tetrahydrofolate binding site.

This sequence belongs to the TRAFAC class TrmE-Era-EngA-EngB-Septin-like GTPase superfamily. TrmE GTPase family. In terms of assembly, homodimer. Heterotetramer of two MnmE and two MnmG subunits. The cofactor is K(+).

The protein localises to the cytoplasm. Exhibits a very high intrinsic GTPase hydrolysis rate. Involved in the addition of a carboxymethylaminomethyl (cmnm) group at the wobble position (U34) of certain tRNAs, forming tRNA-cmnm(5)s(2)U34. This Pseudomonas putida (strain W619) protein is tRNA modification GTPase MnmE.